Here is a 447-residue protein sequence, read N- to C-terminus: Protein cereblon (447 aa).

Composition is skewed to acidic residues over residues Met-1–Pro-10 and Glu-25–Leu-34. The interval Met-1 to Ile-47 is disordered. The 241-residue stretch at Ile-82–Thr-322 folds into the Lon N-terminal domain. A CULT domain is found at Cys-321–Ile-429. Zn(2+) contacts are provided by Cys-326 and Cys-329. (S)-thalidomide-binding residues include Trp-383 and Trp-389. Cys-394 and Cys-397 together coordinate Zn(2+).

This sequence belongs to the CRBN family. In terms of assembly, component of a DCX (DDB1-CUL4-X-box) protein ligase complex.

The protein localises to the cytoplasm. It localises to the nucleus. It participates in protein modification; protein ubiquitination. In terms of biological role, substrate recognition component of a DCX (DDB1-CUL4-X-box) E3 protein ligase complex that mediates the ubiquitination and subsequent proteasomal degradation of target proteins, such as MEIS2. Normal degradation of key regulatory proteins is required for normal limb outgrowth and expression of the fibroblast growth factor FGF8. Maintains presynaptic glutamate release and consequently cognitive functions, such as memory and learning, by negatively regulating large-conductance calcium-activated potassium (BK) channels in excitatory neurons. Likely to function by regulating the assembly and neuronal surface expression of BK channels via its interaction with KCNT1. May also be involved in regulating anxiety-like behaviors via a BK channel-independent mechanism. The protein is Protein cereblon (crbn) of Xenopus tropicalis (Western clawed frog).